We begin with the raw amino-acid sequence, 457 residues long: Flavohemoprotein-1 (457 aa).

The Globin domain occupies 2 to 157 (ALSEDTIKAV…LADLLIKREE (156 aa)). His-106 serves as a coordination point for heme b. Residues Tyr-116 and Glu-156 each act as charge relay system in the active site. A reductase region spans residues 168–456 (GGWRQTRTFR…FEMFGPFKAS (289 aa)). Positions 171–278 (RQTRTFRVEE…APPYGDFFLR (108 aa)) constitute an FAD-binding FR-type domain. Residues Tyr-210 and 227–230 (RQYS) each bind FAD. 320 to 325 (GIGQTP) is an NADP(+) binding site. 449 to 452 (MFGP) serves as a coordination point for FAD.

It belongs to the globin family. Two-domain flavohemoproteins subfamily. In the C-terminal section; belongs to the flavoprotein pyridine nucleotide cytochrome reductase family. As to quaternary structure, monomer. Heme b serves as cofactor. It depends on FAD as a cofactor.

The catalysed reaction is 2 nitric oxide + NADPH + 2 O2 = 2 nitrate + NADP(+) + H(+). It catalyses the reaction 2 nitric oxide + NADH + 2 O2 = 2 nitrate + NAD(+) + H(+). Functionally, flavohemoprotein involved in nitric oxide (NO) detoxification in an aerobic process, termed nitric oxide dioxygenase (NOD) reaction that utilizes O(2) and NAD(P)H to convert NO to nitrate, which protects the protozoan parasite from various noxious nitrogen compounds. Therefore, plays a central role in the inducible response to nitrosative stress. May also be involved in O(2) detoxification. The polypeptide is Flavohemoprotein-1 (hmpA-1) (Giardia intestinalis (strain P15) (Giardia lamblia)).